Reading from the N-terminus, the 64-residue chain is Large ribosomal subunit protein uL29 (64 aa).

It belongs to the universal ribosomal protein uL29 family.

The chain is Large ribosomal subunit protein uL29 from Legionella pneumophila (strain Lens).